Here is a 266-residue protein sequence, read N- to C-terminus: Large ribosomal subunit protein eL8 (266 aa).

Glycyl lysine isopeptide (Lys-Gly) (interchain with G-Cter in SUMO2) cross-links involve residues Lys11, Lys20, and Lys21. Lys34 is modified (N6-acetyllysine). A Glycyl lysine isopeptide (Lys-Gly) (interchain with G-Cter in SUMO2) cross-link involves residue Lys48. An N6-acetyllysine; alternate modification is found at Lys97. A Glycyl lysine isopeptide (Lys-Gly) (interchain with G-Cter in SUMO2); alternate cross-link involves residue Lys97. Residue Lys125 forms a Glycyl lysine isopeptide (Lys-Gly) (interchain with G-Cter in SUMO2) linkage. The residue at position 217 (Lys217) is an N6-acetyllysine. Residue Lys245 forms a Glycyl lysine isopeptide (Lys-Gly) (interchain with G-Cter in SUMO2) linkage.

This sequence belongs to the eukaryotic ribosomal protein eL8 family. In terms of assembly, component of the large ribosomal subunit. Interacts with CRY1. Interacts with DICER1, AGO2, TARBP2, MOV10 and EIF6; they form a large RNA-induced silencing complex (RISC).

The protein localises to the cytoplasm. Component of the large ribosomal subunit. The ribosome is a large ribonucleoprotein complex responsible for the synthesis of proteins in the cell. The protein is Large ribosomal subunit protein eL8 (Rpl7a) of Rattus norvegicus (Rat).